The chain runs to 323 residues: Voltage-dependent calcium channel gamma-2 subunit (323 aa).

A helical transmembrane segment spans residues 10–30; it reads MLLTTVGAFAAFSLMTIAVGT. N-linked (GlcNAc...) asparagine glycosylation occurs at Asn-48. The next 3 helical transmembrane spans lie at 104 to 124, 134 to 154, and 182 to 202; these read SSIFPILSVILLFMGGLCIAA, IILSAGIFFVSAGLSNIIGII, and FGALSFIIAEMVGVLAVHMFI. The tract at residues 233-261 is disordered; the sequence is YQRRSRSSSRSTEPSHSRDASPVGVKGFN. Ser-253 carries the post-translational modification Phosphoserine. The residue at position 271 (Tyr-271) is a Phosphotyrosine. Thr-321 bears the Phosphothreonine; by PKA mark.

This sequence belongs to the PMP-22/EMP/MP20 family. CACNG subfamily. In terms of assembly, the L-type calcium channel is composed of five subunits: alpha-1, alpha-2/delta, beta and gamma. Interacts with the PDZ domains of DLG4/PSD-95 and DLG1/SAP97. May interact with GOPC. Acts as an auxiliary subunit for AMPA-selective glutamate receptors (AMPARs). Found in a complex with GRIA1, GRIA2, GRIA3, GRIA4, CNIH2, CNIH3, CACNG3, CACNG4, CACNG5, CACNG7 and CACNG8. Interacts with GRIA1 and GRIA2. Interacts with MPP2. Phosphorylation of Thr-321 by PKA impairs interaction with DLG1 and DLG4. Brain.

The protein localises to the membrane. It is found in the synapse. Its subcellular location is the synaptosome. Regulates the trafficking and gating properties of AMPA-selective glutamate receptors (AMPARs). Promotes their targeting to the cell membrane and synapses and modulates their gating properties by slowing their rates of activation, deactivation and desensitization. Does not show subunit-specific AMPA receptor regulation and regulates all AMPAR subunits. Thought to stabilize the calcium channel in an inactivated (closed) state. The protein is Voltage-dependent calcium channel gamma-2 subunit (Cacng2) of Mus musculus (Mouse).